Here is a 363-residue protein sequence, read N- to C-terminus: Electron transfer flavoprotein subunit alpha, mitochondrial (363 aa).

A mitochondrion-targeting transit peptide spans 1–24 (MTRTVLLRALTKNKFVASNAPRSI). An FAD-binding site is contributed by 303–331 (LYMAFGVSGAIQHLAGIKDSKVIVAVNKD).

It belongs to the ETF alpha-subunit/FixB family. Heterodimer of an alpha and a beta subunit. FAD is required as a cofactor.

The protein localises to the mitochondrion matrix. In terms of biological role, the electron transfer flavoprotein serves as a specific electron acceptor for several dehydrogenases, including five acyl-CoA dehydrogenases, glutaryl-CoA and sarcosine dehydrogenase. It transfers the electrons to the main mitochondrial respiratory chain via ETF-ubiquinone oxidoreductase (ETF dehydrogenase). Involved in leucine catabolism and in phytol degradation. This is Electron transfer flavoprotein subunit alpha, mitochondrial (ETFA) from Arabidopsis thaliana (Mouse-ear cress).